The primary structure comprises 518 residues: DNA-binding protein Ikaros (518 aa).

A disordered region spans residues 1–51; it reads METDEAQDMSQVSGKESPPISDVPDDADEPMPVPEDLSTTTGGQQSVKNER. Positions 37–47 are enriched in polar residues; that stretch reads LSTTTGGQQSV. C2H2-type zinc fingers lie at residues 117-139, 145-167, 173-195, and 201-224; these read LKCD…NRSH, FQCN…IKLH, FKCH…LRTH, and HKCG…ERCH. The disordered stretch occupies residues 381–405; it reads SVSSERDASPSNSCQDSTDTESNNE. C2H2-type zinc fingers lie at residues 461–483 and 489–513; these read YKCE…MGCH and FECN…RGEH.

Belongs to the Ikaros C2H2-type zinc-finger protein family. Expressed in embryonic hematopoietic organs such as the bursa of Fabricius, thymus and spleen. In the adult, expressed in spleen, thymus, bursa and peripheral blood leukocytes.

The protein localises to the nucleus. Functionally, binds and activates the enhancer (delta-A element) of the CD3-delta gene. Functions in the specification and the maturation of the T-lymphocyte. Also interacts with a critical control element in the TDT (terminal deoxynucleotidyltransferase) promoter as well as with the promoters for other genes expressed during early stages of B- and T-cell development. Function is isoform-specific and is modulated by dominant-negative inactive isoforms. This is DNA-binding protein Ikaros (IKZF1) from Gallus gallus (Chicken).